The sequence spans 111 residues: Large ribosomal subunit protein uL24 (111 aa).

Residues 43–62 are disordered; it reads TRHKKKDQTTKRAAKQSTGK.

The protein belongs to the universal ribosomal protein uL24 family. In terms of assembly, part of the 50S ribosomal subunit.

In terms of biological role, one of two assembly initiator proteins, it binds directly to the 5'-end of the 23S rRNA, where it nucleates assembly of the 50S subunit. Its function is as follows. One of the proteins that surrounds the polypeptide exit tunnel on the outside of the subunit. The sequence is that of Large ribosomal subunit protein uL24 from Mycoplasma pneumoniae (strain ATCC 29342 / M129 / Subtype 1) (Mycoplasmoides pneumoniae).